Here is a 115-residue protein sequence, read N- to C-terminus: Large ribosomal subunit protein bL19 (115 aa).

The protein belongs to the bacterial ribosomal protein bL19 family.

Its function is as follows. This protein is located at the 30S-50S ribosomal subunit interface and may play a role in the structure and function of the aminoacyl-tRNA binding site. The protein is Large ribosomal subunit protein bL19 of Lacticaseibacillus casei (strain BL23) (Lactobacillus casei).